The sequence spans 395 residues: Protein BUR2 (395 aa).

Disordered regions lie at residues 1–31 (MSAT…ASSG) and 372–395 (AKQE…KPKI). Ser-24 is subject to Phosphoserine.

As to quaternary structure, belongs to the BUR kinase complex composed of SGV1/BUR1 and BUR2. Interacts with SGV1.

The protein localises to the nucleus. Component of the BUR kinase complex involved in transcription regulation. This complex phosphorylates 'Ser-120' of the UBC2/RAD6 ubiquitin-conjugating enzyme (E2), leading to monoubiquitination of histone H2B, the localization of the PAF1 complex to the chromatin, and the silencing of telomeric-associated genes. Also required for histone H3 'Lys-4' trimethylation. May phosphorylate the 'Ser-5' of the RBP1 carboxy-terminal domain (CTD) repeats. Necessary for the recovery from pheromone-induced growth arrest in the cell cycle G1 phase. Also required for vegetative growth itself. The kinase activity of the complex requires the presence of BUR2. Overexpression of BUR2 interferes with mitotic chromosome segregation. This chain is Protein BUR2 (BUR2), found in Saccharomyces cerevisiae (strain ATCC 204508 / S288c) (Baker's yeast).